Consider the following 220-residue polypeptide: Antistasin (220 aa).

The signal sequence occupies residues 1 to 19; sequence MNYLFVFLALSAAVTFANA. Antistasin-like domains are found at residues 21–46, 54–79, 91–117, 120–145, 154–180, and 183–208; these read CNKI…ICKC, CSNR…ICRC, CDGL…KCEC, CKQF…TCKC, CDDL…KCEC, and CKNF…TCKC.

Belongs to the protease inhibitor I15 (antistasin) family. Gland cells. It is more strongly expressed in the head than in the gastric tissue.

Its subcellular location is the secreted. Functionally, this highly disulfide-bonded protein is a potent inhibitor of factor Xa. Facilitates digestion of tissues and may also protect the gastric tissues from its own digestive enzymes. May have therapeutic utility as an anticoagulant. Also exhibits a strong metastatic activity. The chain is Antistasin from Hydra vulgaris (Hydra).